The chain runs to 183 residues: NADH dehydrogenase [ubiquinone] iron-sulfur protein 4, mitochondrial (183 aa).

A mitochondrion-targeting transit peptide spans 1–28 (MSALRQVMCRSTASLQLYQANRAAAARW). At serine 181 the chain carries Phosphoserine.

Belongs to the complex I NDUFS4 subunit family.

It is found in the mitochondrion inner membrane. Accessory subunit of the mitochondrial membrane respiratory chain NADH dehydrogenase (Complex I), that is believed not to be involved in catalysis. Complex I functions in the transfer of electrons from NADH to the respiratory chain. The immediate electron acceptor for the enzyme is believed to be ubiquinone. In Drosophila melanogaster (Fruit fly), this protein is NADH dehydrogenase [ubiquinone] iron-sulfur protein 4, mitochondrial.